A 111-amino-acid chain; its full sequence is DNA-binding protein AF_2068 (111 aa).

The protein belongs to the PDCD5 family.

The protein is DNA-binding protein AF_2068 of Archaeoglobus fulgidus (strain ATCC 49558 / DSM 4304 / JCM 9628 / NBRC 100126 / VC-16).